The primary structure comprises 464 residues: Glutamate--tRNA ligase (464 aa).

The 'HIGH' region motif lies at 9–19 (PSPTGYLHIGG). The 'KMSKS' region signature appears at 242 to 246 (KISKR). Lys-245 contacts ATP.

The protein belongs to the class-I aminoacyl-tRNA synthetase family. Glutamate--tRNA ligase type 1 subfamily. Monomer.

It is found in the cytoplasm. The enzyme catalyses tRNA(Glu) + L-glutamate + ATP = L-glutamyl-tRNA(Glu) + AMP + diphosphate. In terms of biological role, catalyzes the attachment of glutamate to tRNA(Glu) in a two-step reaction: glutamate is first activated by ATP to form Glu-AMP and then transferred to the acceptor end of tRNA(Glu). This chain is Glutamate--tRNA ligase, found in Neisseria meningitidis serogroup C / serotype 2a (strain ATCC 700532 / DSM 15464 / FAM18).